Here is a 154-residue protein sequence, read N- to C-terminus: UPF0178 protein RC1_2062 (154 aa).

Belongs to the UPF0178 family.

This Rhodospirillum centenum (strain ATCC 51521 / SW) protein is UPF0178 protein RC1_2062.